Reading from the N-terminus, the 150-residue chain is UPF0178 protein Ssed_1350 (150 aa).

This sequence belongs to the UPF0178 family.

The polypeptide is UPF0178 protein Ssed_1350 (Shewanella sediminis (strain HAW-EB3)).